The chain runs to 572 residues: Hemolysin-1 (572 aa).

Its function is as follows. Bacterial hemolysins are exotoxins that attack blood cell membranes and cause cell rupture by mechanisms not clearly defined. This Aeromonas salmonicida protein is Hemolysin-1 (ash1).